The primary structure comprises 142 residues: uncharacterized protein (142 aa).

Belongs to the IIV-6 115R family.

This is an uncharacterized protein from Invertebrate iridescent virus 3 (IIV-3).